The primary structure comprises 210 residues: Orotate phosphoribosyltransferase (210 aa).

5-phospho-alpha-D-ribose 1-diphosphate is bound by residues Arg-94, Lys-98, His-100, and 120-128 (EDLISTGGS). Residue Ser-124 participates in orotate binding.

It belongs to the purine/pyrimidine phosphoribosyltransferase family. PyrE subfamily. In terms of assembly, homodimer. It depends on Mg(2+) as a cofactor.

It carries out the reaction orotidine 5'-phosphate + diphosphate = orotate + 5-phospho-alpha-D-ribose 1-diphosphate. Its pathway is pyrimidine metabolism; UMP biosynthesis via de novo pathway; UMP from orotate: step 1/2. Catalyzes the transfer of a ribosyl phosphate group from 5-phosphoribose 1-diphosphate to orotate, leading to the formation of orotidine monophosphate (OMP). This is Orotate phosphoribosyltransferase from Bacillus cereus (strain ATCC 14579 / DSM 31 / CCUG 7414 / JCM 2152 / NBRC 15305 / NCIMB 9373 / NCTC 2599 / NRRL B-3711).